The chain runs to 319 residues: Annexin A4 (319 aa).

The residue at position 2 (Ala2) is an N-acetylalanine. Thr7 carries the post-translational modification Phosphothreonine; by PKC. Ser12 is modified (phosphoserine). Annexin repeat units follow at residues 14–85, 86–157, 169–241, and 245–316; these read FNAA…GMMT, PTVL…SLSA, ALVR…AIVK, and NKSA…ILCG. N6-acetyllysine is present on residues Lys213, Lys293, and Lys300.

It belongs to the annexin family. Monomer.

It localises to the zymogen granule membrane. Its function is as follows. Calcium/phospholipid-binding protein which promotes membrane fusion and is involved in exocytosis. The chain is Annexin A4 (ANXA4) from Sus scrofa (Pig).